The following is a 121-amino-acid chain: Trypsin/alpha-amylase inhibitor CMX1/CMX3 (121 aa).

A signal peptide spans M1–S24.

Belongs to the protease inhibitor I6 (cereal trypsin/alpha-amylase inhibitor) family.

It localises to the secreted. The sequence is that of Trypsin/alpha-amylase inhibitor CMX1/CMX3 from Triticum aestivum (Wheat).